A 37-amino-acid chain; its full sequence is Photosystem II reaction center protein T (37 aa).

Residues alanine 3 to phenylalanine 23 form a helical membrane-spanning segment.

This sequence belongs to the PsbT family. As to quaternary structure, PSII is composed of 1 copy each of membrane proteins PsbA, PsbB, PsbC, PsbD, PsbE, PsbF, PsbH, PsbI, PsbJ, PsbK, PsbL, PsbM, PsbT, PsbY, PsbZ, Psb30/Ycf12, at least 3 peripheral proteins of the oxygen-evolving complex and a large number of cofactors. It forms dimeric complexes.

The protein resides in the plastid. It localises to the chloroplast thylakoid membrane. Its function is as follows. Found at the monomer-monomer interface of the photosystem II (PS II) dimer, plays a role in assembly and dimerization of PSII. PSII is a light-driven water plastoquinone oxidoreductase, using light energy to abstract electrons from H(2)O, generating a proton gradient subsequently used for ATP formation. This is Photosystem II reaction center protein T from Spirogyra maxima (Green alga).